A 1100-amino-acid polypeptide reads, in one-letter code: MTSPAKFRKDKEIIAEYETQVKEIRAQLVEQLKCLDQQCELRVQLLQDLQDFFRKKAEIEMDYSRNLEKLAERFLAKTRYTKDPQFKKEQNILSPVNCWNLLLAQVKRESRDHATLSDLYLNNIIPRFAQISEDSGRLFKKSKEVGLQLQEDLMKVLNELYTVMKTYHMYNMDSINAESKLKEAEKQEEKQMSRSVRHEEKQTPRSPDSLTNIKIEDKHVRRSSVKKIEKMKEKRQAKYTENKLKAIKARNEYLLALEATNSCVFKYYIHDLSDLIDCCDLGYHASLNRALRTYLSAEFNVETSKHGGLETIENAAENLEANSDKQRLMETYNNVFCPPMRFDFQSHMGDMVGHLCAQQPVQGELIQRCQQLQSRLSTLNIENEEVKKTMEATLQTIQDMVTIEDFDVTDCFHHSNSMESVKSTVSESFMSKPSLAKRRANQQETEQFYFTKLKEFLEGRNLITKLQAKHDLIQKTLGESQKTDYCLASGRRDSTVRKQEAIQIIPLMVESCIRFISRHGLHHEGIFRVSGSQVEVNDIKNAFERGEDPLAGDQNDHDMDSIAGVLKLYFRGLENALFPKEVFHDLMSCVSIESLQERAVHIRKVLLSLPSNILVIMRYLFAFLNHLSQYSDDNMMDPYNLAICFGPTLMSVPEGHDQVSCQAHVNELIKTIIIHHESIFPGPRELEGPVYDRGGAPEEYCDSPHIEPPLVDEPAPDTVSVIHNSDDVKSGPLTVSESDPIEAIARFDYSGRTNRELSFKKGASLLLYSRASDDWWEGRHNGTEGLVPHQYIVVQDMPDGYAGRGSPKADLEGSHDSVEEKVSTRASASSPTGGHVADIYLANLNKLRKRPEATSIRRTIRPVEEGSSGAAGGLKTSSMPAGGLAKDSSDKRPVSAHSVLNSITRHSSLKTKVEGPQVRKSTPTGRSKSFSNHRPLDPEVIAQVEHSSQDIEATMNTALSELRELERQSNVKHAPDVVLDTLEQLKSGGTSEPSSPLHSRLLREAESSQHPLQRSASSASDMPSTFRPSKTTGPKSPLSSMTTASGSTFRDNKPPATRPKPVVFPKSSSAGGSPAMGSPTTTIPPTPPPPPPPTDKSCPV.

Residues 19-324 (TQVKEIRAQL…AAENLEANSD (306 aa)) enclose the F-BAR domain. Coiled coils occupy residues 170 to 201 (YNMDSINAESKLKEAEKQEEKQMSRSVRHEEK) and 363 to 400 (GELIQRCQQLQSRLSTLNIENEEVKKTMEATLQTIQDM). Residues 181-203 (LKEAEKQEEKQMSRSVRHEEKQT) are compositionally biased toward basic and acidic residues. Residues 181–210 (LKEAEKQEEKQMSRSVRHEEKQTPRSPDSL) form a disordered region. The region spanning 496–680 (VRKQEAIQII…TIIIHHESIF (185 aa)) is the Rho-GAP domain. Residues 738–797 (SDPIEAIARFDYSGRTNRELSFKKGASLLLYSRASDDWWEGRHNGTEGLVPHQYIVVQDM) enclose the SH3 domain. Disordered regions lie at residues 800 to 835 (GYAGRGSPKADLEGSHDSVEEKVSTRASASSPTGGH) and 852 to 938 (EATS…PLDP). Over residues 807–823 (PKADLEGSHDSVEEKVS) the composition is skewed to basic and acidic residues. A compositionally biased stretch (polar residues) spans 919-932 (RKSTPTGRSKSFSN). The stretch at 945 to 972 (EHSSQDIEATMNTALSELRELERQSNVK) forms a coiled coil. Residues 986–1100 (KSGGTSEPSS…PPPTDKSCPV (115 aa)) form a disordered region. Composition is skewed to polar residues over residues 987-997 (SGGTSEPSSPL) and 1008-1049 (SQHP…GSTF). A compositionally biased stretch (low complexity) spans 1067–1081 (SSSAGGSPAMGSPTT). Over residues 1082–1094 (TIPPTPPPPPPPT) the composition is skewed to pro residues.

It localises to the cell membrane. Its subcellular location is the cell projection. The protein resides in the dendritic spine. The protein localises to the postsynaptic density. It is found in the postsynaptic cell membrane. It localises to the lamellipodium. Its subcellular location is the cytoplasmic vesicle. The protein resides in the phagosome. The protein localises to the nucleus. It is found in the cytoplasm. It localises to the cytosol. Postsynaptic RAC1 GTPase activating protein (GAP) that plays a key role in neuronal morphogenesis and migration mainly during development of the cerebral cortex. Regulates excitatory and inhibitory synapse maturation and density in cortical pyramidal neurons. Mechanistically, acts by binding and deforming membranes, thereby regulating actin dynamics to regulate cell migration and differentiation. The polypeptide is SLIT-ROBO Rho GTPase-activating protein 2 (srgap2) (Danio rerio (Zebrafish)).